A 652-amino-acid chain; its full sequence is Leucine-rich repeat-containing protein 4 (652 aa).

Positions 1 to 40 are cleaved as a signal peptide; sequence MKLLWQVTVHHTWNAVLLPVVYLTAQVWILCAAIAAAASA. In terms of domain architecture, LRRNT spans 41-74; the sequence is GPQNCPSVCSCSNQFSKVVCTRRGLSEVPQGIPS. The Extracellular segment spans residues 41 to 526; the sequence is GPQNCPSVCS…SLDEVMKTTK (486 aa). Intrachain disulfides connect cysteine 45–cysteine 51 and cysteine 49–cysteine 60. LRR repeat units follow at residues 75-96, 99-120, 123-144, 147-168, 171-193, 196-217, 218-239, 242-263, and 266-287; these read NTRY…TFRH, HLEV…AFNG, SLNT…AFEY, KLRE…AFNR, SLMR…AFEG, NLKY…TPLV, GLEE…SFHG, SLKK…AFDG, and SLVE…LFTP. Asparagine 276, asparagine 321, asparagine 362, asparagine 387, asparagine 409, asparagine 433, asparagine 439, and asparagine 449 each carry an N-linked (GlcNAc...) asparagine glycan. An LRRCT domain is found at 299-351; that stretch reads NPWNCDCDILWLAWWLREYIPTNSTCCGRCHAPMHMRGRYLVEVDQAAFQCSA. 2 disulfide bridges follow: cysteine 303/cysteine 328 and cysteine 305/cysteine 349. The region spanning 352 to 441 is the Ig-like domain; it reads PFIMDAPRDL…SNASAYLNVS (90 aa). The cysteines at positions 373 and 423 are disulfide-linked. The helical transmembrane segment at 527–547 threads the bilayer; it reads IIIGCFVAVTLLAAAMLIVFY. At 548-652 the chain is on the cytoplasmic side; it reads KLRKRHQQRS…TKDKVQETQI (105 aa).

In terms of assembly, interacts (via LRR repeats) with NTNG2. Interacts with DLG4. Forms a complex with DLG4 and with NMDA receptors. In terms of processing, N-glycosylated. As to expression, specifically expressed in brain. In the hippocampus, parietal cortex and piriform cortex expressed in proximal segments of CA1 pyramidal neurons.

The protein resides in the membrane. Its subcellular location is the postsynaptic cell membrane. Its function is as follows. Synaptic adhesion protein. Regulates the formation of exitatory synapses through the recruitment of pre-and-postsynaptic proteins. Organize the lamina/pathway-specific differentiation of dendrites. Plays an important role for auditory synaptic responses. Involved in the suppression of glioma. The sequence is that of Leucine-rich repeat-containing protein 4 (Lrrc4) from Mus musculus (Mouse).